The sequence spans 263 residues: 3-methyl-2-oxobutanoate hydroxymethyltransferase (263 aa).

Mg(2+) is bound by residues Asp-45 and Asp-84. 3-methyl-2-oxobutanoate-binding positions include 45–46, Asp-84, and Lys-112; that span reads DS. Glu-114 provides a ligand contact to Mg(2+). The Proton acceptor role is filled by Glu-180.

This sequence belongs to the PanB family. Homodecamer; pentamer of dimers. Mg(2+) is required as a cofactor.

It localises to the cytoplasm. It carries out the reaction 3-methyl-2-oxobutanoate + (6R)-5,10-methylene-5,6,7,8-tetrahydrofolate + H2O = 2-dehydropantoate + (6S)-5,6,7,8-tetrahydrofolate. It participates in cofactor biosynthesis; (R)-pantothenate biosynthesis; (R)-pantoate from 3-methyl-2-oxobutanoate: step 1/2. Functionally, catalyzes the reversible reaction in which hydroxymethyl group from 5,10-methylenetetrahydrofolate is transferred onto alpha-ketoisovalerate to form ketopantoate. In Klebsiella pneumoniae (strain 342), this protein is 3-methyl-2-oxobutanoate hydroxymethyltransferase.